The sequence spans 407 residues: Growth/differentiation factor 11 (407 aa).

Residues 1–24 (MVLAAPLLLGFLLLALELRPRGEA) form the signal peptide. A propeptide spanning residues 25–298 (AEGPAAAAAA…VLENTKRSRR (274 aa)) is cleaved from the precursor. An N-linked (GlcNAc...) asparagine glycan is attached at asparagine 94. 4 disulfides stabilise this stretch: cysteine 304–cysteine 314, cysteine 313–cysteine 372, cysteine 341–cysteine 404, and cysteine 345–cysteine 406.

It belongs to the TGF-beta family. As to quaternary structure, homodimer; disulfide-linked. Interacts directly with ACVR2B. Interacts directly with ACVR2A. Interacts with ACVR1B, TGFBR1 and ACVR1C in an ACVR2B-dependent manner. Interacts with FST isoform 2/FS-288. Post-translationally, synthesized as large precursor molecule that undergoes proteolytic cleavage by furin-like proteases. This produces an inactive form consisting of the mature C-terminal portion non-covalently bound to its cleaved N-terminal propeptide. Activation of the mature form requires additional cleavage of the propeptide by a tolloid-like metalloproteinase. As to expression, in the embryo, strong expression is seen in the palatal epithelia, including the medial edge epithelial and midline epithelial seam of the palatal shelves. Less pronounced expression is also seen throughout the palatal shelf and tongue mesenchyme.

It is found in the secreted. Its function is as follows. Secreted signal that acts globally to regulate anterior/posterior axial patterning during development. May play critical roles in patterning both mesodermal and neural tissues. It is required for proper vertebral patterning and orofacial development. Signals through activin receptors type-2, ACVR2A and ACVR2B, and activin receptors type-1, ACVR1B, ACVR1C and TGFBR1 leading to the phosphorylation of SMAD2 and SMAD3. In Homo sapiens (Human), this protein is Growth/differentiation factor 11 (GDF11).